We begin with the raw amino-acid sequence, 627 residues long: Phosphomethylpyrimidine synthase (627 aa).

Polar residues predominate over residues 1–24; the sequence is MSATQKNNITRLEQLDRQSTQPFP. A disordered region spans residues 1–29; it reads MSATQKNNITRLEQLDRQSTQPFPNSRKV. Residues asparagine 231, methionine 260, tyrosine 289, histidine 325, 345-347, 386-389, and glutamate 425 each bind substrate; these read SRG and DGLR. A Zn(2+)-binding site is contributed by histidine 429. Tyrosine 452 is a binding site for substrate. Histidine 493 lines the Zn(2+) pocket. 3 residues coordinate [4Fe-4S] cluster: cysteine 573, cysteine 576, and cysteine 581.

This sequence belongs to the ThiC family. In terms of assembly, homodimer. The cofactor is [4Fe-4S] cluster.

It catalyses the reaction 5-amino-1-(5-phospho-beta-D-ribosyl)imidazole + S-adenosyl-L-methionine = 4-amino-2-methyl-5-(phosphooxymethyl)pyrimidine + CO + 5'-deoxyadenosine + formate + L-methionine + 3 H(+). The protein operates within cofactor biosynthesis; thiamine diphosphate biosynthesis. Its function is as follows. Catalyzes the synthesis of the hydroxymethylpyrimidine phosphate (HMP-P) moiety of thiamine from aminoimidazole ribotide (AIR) in a radical S-adenosyl-L-methionine (SAM)-dependent reaction. The sequence is that of Phosphomethylpyrimidine synthase from Pseudomonas aeruginosa (strain LESB58).